The following is a 206-amino-acid chain: Cytochrome c oxidase assembly factor 8 (206 aa).

The transit peptide at 1 to 39 directs the protein to the mitochondrion; that stretch reads MLPCAAGARGRGAMVVLRAGKKTFLPPLCRAFACRGCQL.

This sequence belongs to the COA8 family. N-terminal mitochondrial targeting sequence is cleaved from the mature protein once in the mitochondrion. Post-translationally, in normal conditions, the cytoplasmic precursor protein is rapidly degraded by the ubiquitination-proteasome system (UPS). Oxidative stress induces protein stabilization and import into mitochondria where it protects COX from degradation. As to expression, expressed in fibroblasts.

The protein localises to the mitochondrion inner membrane. Required for cytochrome c complex (COX) IV assembly and function Protects COX assembly from oxidation-induced degradation, COX being the terminal component of the mitochondrial respiratory chain. This Homo sapiens (Human) protein is Cytochrome c oxidase assembly factor 8.